A 174-amino-acid chain; its full sequence is MPKYYCDYCDKYLTHDSPSVRKSHTVGKQHKLAVQLFYQQFEAEFTQSLIEARLKEYEESKGRLIHQPPMGIIPTPYGQMYQQQQQQQQQQGILPFQGMQPPPHQQQGMVLSPGMPIHKMQPHQFNNNNNPHQQHSFQPPHHQHHPHQQHQQHQQHQHQHQHQQQHNQPTIPGL.

A Matrin-type zinc finger spans residues 4–36; it reads YYCDYCDKYLTHDSPSVRKSHTVGKQHKLAVQL. Low complexity-rich tracts occupy residues 82 to 109 and 122 to 140; these read QQQQ…QQGM and PHQF…FQPP. Residues 82–174 form a disordered region; that stretch reads QQQQQQQQQQ…QHNQPTIPGL (93 aa). A compositionally biased stretch (basic residues) spans 141–163; it reads HHQHHPHQQHQQHQQHQHQHQHQ. Residues 164–174 are compositionally biased toward low complexity; sequence QQHNQPTIPGL.

It belongs to the U1 small nuclear ribonucleoprotein C family. Component of the U1 snRNP. The U1 snRNP is composed of the U1 snRNA and the 7 core Sm proteins SNRPB, SNRPD1, SNRPD2, SNRPD3, SNRPE, SNRPF and SNRPG that assemble in a heptameric protein ring on the Sm site of the small nuclear RNA to form the core snRNP, and at least 3 U1 snRNP-specific proteins SNRNP70/U1-70K, SNRPA/U1-A and SNRPC/U1-C. SNRPC/U1-C interacts with U1 snRNA and the 5' splice-site region of the pre-mRNA.

Its subcellular location is the nucleus. Functionally, component of the spliceosomal U1 snRNP, which is essential for recognition of the pre-mRNA 5' splice-site and the subsequent assembly of the spliceosome. SNRPC/U1-C is directly involved in initial 5' splice-site recognition for both constitutive and regulated alternative splicing. The interaction with the 5' splice-site seems to precede base-pairing between the pre-mRNA and the U1 snRNA. Stimulates commitment or early (E) complex formation by stabilizing the base pairing of the 5' end of the U1 snRNA and the 5' splice-site region. The sequence is that of U1 small nuclear ribonucleoprotein C from Dictyostelium discoideum (Social amoeba).